The sequence spans 310 residues: Aspartate carbamoyltransferase catalytic subunit (310 aa).

2 residues coordinate carbamoyl phosphate: Arg-58 and Thr-59. Position 86 (Lys-86) interacts with L-aspartate. Residues Arg-108, His-137, and Gln-140 each coordinate carbamoyl phosphate. Arg-170 and Arg-225 together coordinate L-aspartate. The carbamoyl phosphate site is built by Gly-264 and Pro-265.

Belongs to the aspartate/ornithine carbamoyltransferase superfamily. ATCase family. Heterododecamer (2C3:3R2) of six catalytic PyrB chains organized as two trimers (C3), and six regulatory PyrI chains organized as three dimers (R2).

The catalysed reaction is carbamoyl phosphate + L-aspartate = N-carbamoyl-L-aspartate + phosphate + H(+). It participates in pyrimidine metabolism; UMP biosynthesis via de novo pathway; (S)-dihydroorotate from bicarbonate: step 2/3. Functionally, catalyzes the condensation of carbamoyl phosphate and aspartate to form carbamoyl aspartate and inorganic phosphate, the committed step in the de novo pyrimidine nucleotide biosynthesis pathway. This is Aspartate carbamoyltransferase catalytic subunit from Coxiella burnetii (strain CbuK_Q154) (Coxiella burnetii (strain Q154)).